Reading from the N-terminus, the 508-residue chain is Metalloprotease TIKI1 (508 aa).

Residues 1–23 (MVIIWNIFLPAFLLVLAKASLRS) form the signal peptide. The Extracellular segment spans residues 24-485 (SRDSANCKLN…KYIKAAQSVS (462 aa)). N-linked (GlcNAc...) asparagine glycosylation is found at Asn219, Asn228, Asn277, and Asn335. Residues 486-506 (FSLSIPSAFLLLAWCFQQVAV) traverse the membrane as a helical segment. Topologically, residues 507–508 (LQ) are cytoplasmic.

This sequence belongs to the TIKI family. Mn(2+) serves as cofactor. Requires Co(2+) as cofactor. As to expression, zygotically expressed in the Spemann-Mangold organizer, in particular in the head Spemann-Mangold organizer region responsible for anterior patterning.

It is found in the cell membrane. Functionally, metalloprotease that acts as a negative regulator of the Wnt signaling pathway: expressed in the Spemann-Mangold organizer and is required for anterior-neural patterning in head formation in embryos. Acts by mediating the cleavage of the N-terminal residues of a subset of Wnt proteins. Following cleavage, Wnt proteins become oxidized and form large disulfide-bond oligomers, leading to their inactivation. Able to cleave wnt8. This chain is Metalloprotease TIKI1 (trabd2a), found in Xenopus tropicalis (Western clawed frog).